The following is a 310-amino-acid chain: Ribosomal RNA small subunit methyltransferase H (310 aa).

S-adenosyl-L-methionine-binding positions include 33–35, Asp53, Phe79, Asp100, and Gln107; that span reads AGH.

The protein belongs to the methyltransferase superfamily. RsmH family.

Its subcellular location is the cytoplasm. It carries out the reaction cytidine(1402) in 16S rRNA + S-adenosyl-L-methionine = N(4)-methylcytidine(1402) in 16S rRNA + S-adenosyl-L-homocysteine + H(+). Functionally, specifically methylates the N4 position of cytidine in position 1402 (C1402) of 16S rRNA. In Clostridium perfringens (strain 13 / Type A), this protein is Ribosomal RNA small subunit methyltransferase H.